The following is a 71-amino-acid chain: Small ribosomal subunit protein bS21 (71 aa).

The span at 49–59 (AAAAVKRHAKK) shows a compositional bias: basic residues. Residues 49-71 (AAAAVKRHAKKVQREQRRSVRLY) are disordered. Positions 60–71 (VQREQRRSVRLY) are enriched in basic and acidic residues.

Belongs to the bacterial ribosomal protein bS21 family.

In Stutzerimonas stutzeri (strain A1501) (Pseudomonas stutzeri), this protein is Small ribosomal subunit protein bS21.